Consider the following 181-residue polypeptide: Isopentenyl-diphosphate Delta-isomerase (181 aa).

Mn(2+) contacts are provided by His25 and His32. Residues 30–164 form the Nudix hydrolase domain; that stretch reads PLHLAFSCWL…PWAFSPWMVM (135 aa). Cys67 is a catalytic residue. Cys67 is a Mg(2+) binding site. His69 lines the Mn(2+) pocket. Glu87 contacts Mg(2+). Mn(2+)-binding residues include Glu114 and Glu116. Residue Glu116 is part of the active site.

It belongs to the IPP isomerase type 1 family. In terms of assembly, homodimer. Requires Mg(2+) as cofactor. It depends on Mn(2+) as a cofactor.

It localises to the cytoplasm. The enzyme catalyses isopentenyl diphosphate = dimethylallyl diphosphate. It functions in the pathway isoprenoid biosynthesis; dimethylallyl diphosphate biosynthesis; dimethylallyl diphosphate from isopentenyl diphosphate: step 1/1. Catalyzes the 1,3-allylic rearrangement of the homoallylic substrate isopentenyl (IPP) to its highly electrophilic allylic isomer, dimethylallyl diphosphate (DMAPP). In Salmonella typhi, this protein is Isopentenyl-diphosphate Delta-isomerase.